Here is a 1357-residue protein sequence, read N- to C-terminus: Mediator of RNA polymerase II transcription subunit 13 (1357 aa).

2 disordered regions span residues 356 to 391 and 420 to 487; these read SCNY…GNGF and DLWN…HRKE. Polar residues predominate over residues 435–451; that stretch reads INPTSQQGDSARITSGS.

Belongs to the Mediator complex subunit 13 family. Component of the SRB8-11 complex, which itself associates with the Mediator complex.

The protein resides in the nucleus. In terms of biological role, component of the SRB8-11 complex. The SRB8-11 complex is a regulatory module of the Mediator complex which is itself involved in regulation of basal and activated RNA polymerase II-dependent transcription. The SRB8-11 complex may be involved in the transcriptional repression of a subset of genes regulated by Mediator. It may inhibit the association of the Mediator complex with RNA polymerase II to form the holoenzyme complex. The chain is Mediator of RNA polymerase II transcription subunit 13 (SSN2) from Eremothecium gossypii (strain ATCC 10895 / CBS 109.51 / FGSC 9923 / NRRL Y-1056) (Yeast).